The chain runs to 227 residues: Zinc finger protein ZAT10 (227 aa).

Residues 80-102 form a C2H2-type 1 zinc finger; that stretch reads YKCSVCDKTFSSYQALGGHKASH. Residues 96 to 128 are disordered; the sequence is GGHKASHRKNLSQTLSGGGDDHSTSSATTTSAV. The segment covering 119 to 128 has biased composition (low complexity); it reads TSSATTTSAV. A C2H2-type 2 zinc finger spans residues 136–158; that stretch reads HVCTICNKSFPSGQALGGHKRCH. The segment at 168 to 189 is disordered; sequence SSVSNSEGAGSTSHVSSSHRGF. The span at 174-186 shows a compositional bias: polar residues; the sequence is EGAGSTSHVSSSH.

Expressed in roots, stems and leaves.

It localises to the nucleus. Transcriptional repressor involved in abiotic stress responses. Can repress the stress responsive genes DREB1A and LTI78. Probably involved in jasmonate (JA) early signaling response. May regulate the expression of the JA biosynthesis gene LOX3 and control the expression of TIFY10A/JAZ1, a key repressor in the JA signaling cascade. In Arabidopsis thaliana (Mouse-ear cress), this protein is Zinc finger protein ZAT10 (ZAT10).